A 284-amino-acid chain; its full sequence is Polyamine aminopropyltransferase (284 aa).

Positions 2 to 237 constitute a PABS domain; the sequence is ELWYTEKHTE…GHWLFGFASK (236 aa). Q31 is an S-methyl-5'-thioadenosine binding site. Residues H62 and D86 each contribute to the spermidine site. Residues E106 and 137-138 each bind S-methyl-5'-thioadenosine; that span reads DG. The Proton acceptor role is filled by D155. A spermidine-binding site is contributed by 155 to 158; sequence DSTD. P162 is a binding site for S-methyl-5'-thioadenosine.

It belongs to the spermidine/spermine synthase family. Homodimer or homotetramer.

The protein localises to the cytoplasm. It carries out the reaction S-adenosyl 3-(methylsulfanyl)propylamine + putrescine = S-methyl-5'-thioadenosine + spermidine + H(+). It functions in the pathway amine and polyamine biosynthesis; spermidine biosynthesis; spermidine from putrescine: step 1/1. Catalyzes the irreversible transfer of a propylamine group from the amino donor S-adenosylmethioninamine (decarboxy-AdoMet) to putrescine (1,4-diaminobutane) to yield spermidine. This is Polyamine aminopropyltransferase from Clostridium botulinum (strain Alaska E43 / Type E3).